The chain runs to 628 residues: NUAK family SNF1-like kinase 2 (628 aa).

Residue methionine 1 is modified to N-acetylmethionine. The region spanning 53–303 is the Protein kinase domain; that stretch reads YEFLETLGKG…LEDVASHWWV (251 aa). ATP contacts are provided by residues 59–67 and lysine 81; that span reads LGKGTYGKV. The active-site Proton acceptor is the aspartate 175. Threonine 208 carries the phosphothreonine; by LKB1 modification. The disordered stretch occupies residues 355-493; sequence KQHAPGGGST…KEQKPPQASG (139 aa). Phosphoserine is present on serine 435. Residues 457 to 469 are compositionally biased toward low complexity; the sequence is SGYYSSPEPSESG. Residues serine 523, serine 544, serine 547, and serine 573 each carry the phosphoserine modification. The interval 531 to 562 is disordered; the sequence is RPLARASRPSGAVSEDSILSSESFDQLDLPER.

It belongs to the protein kinase superfamily. CAMK Ser/Thr protein kinase family. SNF1 subfamily. It depends on Mg(2+) as a cofactor. Post-translationally, phosphorylated at Thr-208 by STK11/LKB1 in complex with STE20-related adapter-alpha (STRADA) pseudo kinase and CAB39. Autophosphorylation is also possible at Thr-208.

It carries out the reaction L-seryl-[protein] + ATP = O-phospho-L-seryl-[protein] + ADP + H(+). The catalysed reaction is L-threonyl-[protein] + ATP = O-phospho-L-threonyl-[protein] + ADP + H(+). Activated by phosphorylation on Thr-208. Functionally, stress-activated kinase involved in tolerance to glucose starvation. Induces cell-cell detachment by increasing F-actin conversion to G-actin. Expression is induced by CD95 or TNF-alpha, via NF-kappa-B. Protects cells from CD95-mediated apoptosis and is required for the increased motility and invasiveness of CD95-activated tumor cells. Phosphorylates LATS1 and LATS2. Plays a key role in neural tube closure during embryonic development through LATS2 phosphorylation and regulation of the nuclear localization of YAP1 a critical downstream regulatory target in the Hippo signaling pathway. The protein is NUAK family SNF1-like kinase 2 of Homo sapiens (Human).